The primary structure comprises 636 residues: 1-deoxy-D-xylulose-5-phosphate synthase (636 aa).

Thiamine diphosphate-binding positions include His-84 and Gly-125–Ser-127. Asp-156 lines the Mg(2+) pocket. Thiamine diphosphate is bound by residues Gly-157–Ala-158, Asn-185, Phe-292, and Glu-375. Mg(2+) is bound at residue Asn-185.

It belongs to the transketolase family. DXPS subfamily. In terms of assembly, homodimer. The cofactor is Mg(2+). Requires thiamine diphosphate as cofactor.

The enzyme catalyses D-glyceraldehyde 3-phosphate + pyruvate + H(+) = 1-deoxy-D-xylulose 5-phosphate + CO2. It functions in the pathway metabolic intermediate biosynthesis; 1-deoxy-D-xylulose 5-phosphate biosynthesis; 1-deoxy-D-xylulose 5-phosphate from D-glyceraldehyde 3-phosphate and pyruvate: step 1/1. Its function is as follows. Catalyzes the acyloin condensation reaction between C atoms 2 and 3 of pyruvate and glyceraldehyde 3-phosphate to yield 1-deoxy-D-xylulose-5-phosphate (DXP). This chain is 1-deoxy-D-xylulose-5-phosphate synthase, found in Cellvibrio japonicus (strain Ueda107) (Pseudomonas fluorescens subsp. cellulosa).